Here is a 122-residue protein sequence, read N- to C-terminus: Large ribosomal subunit protein uL14 (122 aa).

Belongs to the universal ribosomal protein uL14 family. As to quaternary structure, part of the 50S ribosomal subunit. Forms a cluster with proteins L3 and L19. In the 70S ribosome, L14 and L19 interact and together make contacts with the 16S rRNA in bridges B5 and B8.

Binds to 23S rRNA. Forms part of two intersubunit bridges in the 70S ribosome. The polypeptide is Large ribosomal subunit protein uL14 (Anaeromyxobacter dehalogenans (strain 2CP-1 / ATCC BAA-258)).